The chain runs to 466 residues: F-box only protein 15 (466 aa).

An F-box domain is found at 27 to 73; the sequence is SASLDSLPSEVLLKILSYLDAAALLCAGCVNRRFYHLANDNFIWIRI.

As to quaternary structure, directly interacts with SKP1 and CUL1.

In terms of biological role, substrate-recognition component of the SCF (SKP1-CUL1-F-box protein)-type E3 ubiquitin ligase complex. The sequence is that of F-box only protein 15 (FBXO15) from Bos taurus (Bovine).